Reading from the N-terminus, the 229-residue chain is ATP synthase subunit a (229 aa).

Transmembrane regions (helical) follow at residues 25–45 (ADAI…SLIA), 86–106 (IATL…PGFF), 111–131 (NLNT…IVGI), 142–162 (FMGP…IGHL), 181–201 (LVLM…MMLM), and 202–222 (GVLV…IYIQ).

This sequence belongs to the ATPase A chain family. In terms of assembly, F-type ATPases have 2 components, CF(1) - the catalytic core - and CF(0) - the membrane proton channel. CF(1) has five subunits: alpha(3), beta(3), gamma(1), delta(1), epsilon(1). CF(0) has three main subunits: a(1), b(2) and c(9-12). The alpha and beta chains form an alternating ring which encloses part of the gamma chain. CF(1) is attached to CF(0) by a central stalk formed by the gamma and epsilon chains, while a peripheral stalk is formed by the delta and b chains.

It is found in the cell inner membrane. Its function is as follows. Key component of the proton channel; it plays a direct role in the translocation of protons across the membrane. This Geobacter sulfurreducens (strain ATCC 51573 / DSM 12127 / PCA) protein is ATP synthase subunit a.